The following is a 23-amino-acid chain: Acidic phospholipase CHA-E6a (23 aa).

It belongs to the phospholipase A2 family. Group II subfamily. D49 sub-subfamily. Requires Ca(2+) as cofactor. In terms of processing, contains 7 disulfide bonds. Expressed by the venom gland.

The protein localises to the secreted. The enzyme catalyses a 1,2-diacyl-sn-glycero-3-phosphocholine + H2O = a 1-acyl-sn-glycero-3-phosphocholine + a fatty acid + H(+). Functionally, snake venom phospholipase A2 (PLA2) that shows high lipolytic (1048 umol/mg/min) and weak ADP-induced platelet aggregation activities. Also shows weak anticoagulant activity (IC(50) is less than 1.0 uM). PLA2 catalyzes the calcium-dependent hydrolysis of the 2-acyl groups in 3-sn-phosphoglycerides. The protein is Acidic phospholipase CHA-E6a of Crotalus horridus (Timber rattlesnake).